Here is a 130-residue protein sequence, read N- to C-terminus: Fluoride-specific ion channel FluC (130 aa).

Helical transmembrane passes span 10 to 30 (FAVALGAIGGSLSRYYLSLWF), 41 to 61 (GTLIINLSGCVVMGWFMTVAM), 72 to 89 (LLFGVGFLGSYTTFSTYE), and 105 to 125 (LVYWLGSCLFGALAMELGILL). Na(+)-binding residues include Gly80 and Thr83.

The protein belongs to the fluoride channel Fluc/FEX (TC 1.A.43) family.

It is found in the cell inner membrane. It catalyses the reaction fluoride(in) = fluoride(out). Na(+) is not transported, but it plays an essential structural role and its presence is essential for fluoride channel function. Fluoride-specific ion channel. Important for reducing fluoride concentration in the cell, thus reducing its toxicity. The sequence is that of Fluoride-specific ion channel FluC from Synechococcus sp. (strain JA-2-3B'a(2-13)) (Cyanobacteria bacterium Yellowstone B-Prime).